Consider the following 147-residue polypeptide: Effector TSP1 (147 aa).

The N-terminal stretch at 1–19 (MQITKTLVATLFAASTAFA) is a signal peptide. Intrachain disulfides connect Cys-44/Cys-51 and Cys-67/Cys-87.

As to quaternary structure, homodimer.

Its subcellular location is the secreted. Stimulates salicylic acid signaling in host plant roots. The polypeptide is Effector TSP1 (Hypocrea virens (strain Gv29-8 / FGSC 10586) (Gliocladium virens)).